The primary structure comprises 49 residues: uncharacterized protein (49 aa).

This is an uncharacterized protein from Escherichia coli (Bacteriophage T4).